Consider the following 198-residue polypeptide: ERTMTKDNNLLGKFELSGIPPAPRGVPQIEVTFDIDANGILNVSAVDKATGKENKITITNDKGRLSKEEIDRMINEADRYKSEDEKQKNRICAKNSLESYVYSMKQSVEGDEMKDKISESDRKNRILSKCEETIRWMDNNQLAEKEEFEEKKSELEKVCMPIITAMNRAGGGVPSGMPGGMPGAGGGGGKGPTIEEVD.

Residues 170 to 191 (GGGVPSGMPGGMPGAGGGGGKG) show a composition bias toward gly residues. The interval 170–198 (GGGVPSGMPGGMPGAGGGGGKGPTIEEVD) is disordered.

The protein belongs to the heat shock protein 70 family.

This chain is Heat shock 70 kDa protein, found in Schistosoma japonicum (Blood fluke).